The following is a 451-amino-acid chain: DNA double-strand break repair nuclease NurA (451 aa).

Residues D51 and D126 each coordinate Mn(2+).

This sequence belongs to the NurA family. In terms of assembly, homodimer. Interacts with HerA. Requires Mn(2+) as cofactor.

Exonuclease activity is stimulated in the presence of HerA. Its function is as follows. Involved in DNA double-strand break (DSB) repair. Probably acts with HerA to stimulate resection of the 5' strand and produce the long 3' single-strand that is required for RadA loading. Exhibits 5' endonuclease activity and both 5' and 3' exonuclease activities. The chain is DNA double-strand break repair nuclease NurA from Pyrococcus furiosus (strain ATCC 43587 / DSM 3638 / JCM 8422 / Vc1).